The sequence spans 382 residues: Putative phospholipase A1 (382 aa).

The N-terminal stretch at 1–27 is a signal peptide; that stretch reads MPTMGAEMNTRNMRYILLTGLLPMASA. At 28–65 the chain is on the periplasmic side; the sequence is FGETALQCAALTDNVTRLACYDRIFAAQLPSSAGQEGQ. Residues 66–78 traverse the membrane as a beta stranded segment; it reads ESKAVLNLTETVR. The Extracellular segment spans residues 79-168; sequence SSLDKGEAVI…VQEKFGQQKR (90 aa). The beta stranded transmembrane segment at 169–183 threads the bilayer; sequence AETKLQVSFKSKIAE. The Periplasmic segment spans residues 184–189; it reads DLFKTR. A beta stranded transmembrane segment spans residues 190 to 202; the sequence is ADLWFGYTQRSDW. Residues 203-213 are Extracellular-facing; it reads QIYNQGRKSAP. Serine 211 lines the Ca(2+) pocket. A beta stranded transmembrane segment spans residues 214–233; sequence FRNTDYKPEIFLTQPVKADL. At 234–236 the chain is on the periplasmic side; it reads PFG. A beta stranded membrane pass occupies residues 237–250; sequence GRLRMLGAGFVHQS. The active-site Proton acceptor is histidine 248. Catalysis depends on serine 250, which acts as the Nucleophile. The Extracellular portion of the chain corresponds to 251–259; it reads NGQSRPESR. A Ca(2+)-binding site is contributed by serine 258. The chain crosses the membrane as a beta stranded span at residues 260-272; it reads SWNRIYAMAGMEW. Over 273–274 the chain is Periplasmic; that stretch reads GK. Residues 275–284 form a beta stranded membrane-spanning segment; it reads LTVIPRVWVR. Residues 285–306 lie on the Extracellular side of the membrane; the sequence is AFDQSGDKNDNPDIADYMGYGD. Aspartate 294 provides a ligand contact to Ca(2+). Residues 307–313 traverse the membrane as a beta stranded segment; that stretch reads VKLQYRL. Topologically, residues 314-315 are periplasmic; that stretch reads ND. Residues 316-325 traverse the membrane as a beta stranded segment; the sequence is RQNVYSVLRY. Residues 326–332 lie on the Extracellular side of the membrane; it reads NPKTGYG. Residues 333-341 traverse the membrane as a beta stranded segment; it reads AIEAAYTFP. At 342–346 the chain is on the periplasmic side; it reads IKGKL. A beta stranded membrane pass occupies residues 347-356; sequence KGVVRGFHGY. Residues 357–365 are Extracellular-facing; it reads GESLIDYNH. Residues 366–377 traverse the membrane as a beta stranded segment; it reads KQNGIGIGLMFN. The Periplasmic portion of the chain corresponds to 378–382; sequence DLDGI.

Belongs to the phospholipase A1 family. In terms of assembly, homodimer; dimerization is reversible, and the dimeric form is the active one. Ca(2+) serves as cofactor.

The protein resides in the cell outer membrane. The catalysed reaction is a 1,2-diacyl-sn-glycero-3-phosphocholine + H2O = a 2-acyl-sn-glycero-3-phosphocholine + a fatty acid + H(+). It catalyses the reaction a 1,2-diacyl-sn-glycero-3-phosphocholine + H2O = a 1-acyl-sn-glycero-3-phosphocholine + a fatty acid + H(+). Functionally, hydrolysis of phosphatidylcholine with phospholipase A2 (EC 3.1.1.4) and phospholipase A1 (EC 3.1.1.32) activities. The chain is Putative phospholipase A1 from Neisseria meningitidis serogroup B (strain ATCC BAA-335 / MC58).